Here is a 72-residue protein sequence, read N- to C-terminus: Large ribosomal subunit protein bL31c (72 aa).

Belongs to the bacterial ribosomal protein bL31 family. Type A subfamily. In terms of assembly, part of the 50S ribosomal subunit.

It is found in the plastid. Its subcellular location is the chloroplast. In terms of biological role, binds the 23S rRNA. The protein is Large ribosomal subunit protein bL31c (rpl31) of Thalassiosira pseudonana (Marine diatom).